A 286-amino-acid polypeptide reads, in one-letter code: Dioxygenase trt7 (286 aa).

Residues His129, Asp131, and His206 each contribute to the Fe cation site.

This sequence belongs to the PhyH family. In terms of assembly, homodimer. It depends on Fe cation as a cofactor.

It participates in secondary metabolite biosynthesis; terpenoid biosynthesis. Dioxygenase; part of the gene cluster that mediates the biosynthesis of terretonin, a fungal meroterpenoid that acts as a mycotoxin. The first step of the pathway is the synthesis of 3,5-dimethylorsellinic acid (DMOA) by the polyketide synthase trt4. DMOA is then prenylated into farnesyl-DMOA by the polyprenyl transferase trt2. Methylation by the methyltransferase trt5 then leads to farnesyl-DMOA methyl ester which is further subject to epoxidation by the FAD-dependent monooxygenase trt8 to yield epoxyfarnesyl-DMOA methyl ester. Cyclization of epoxyfarnesyl-DMOA methyl ester by the terpene cyclase trt1 leads to a tetracycle intermediate which is in turn converted to preterretonin. Dehydrogenase trt9 comes next to transform preterretonin to preterrenoid. The FAD-dependent monooxygenase trt3 is then required for the C-hydroxylation at C16 of preterrenoid to yield terrenoid. The cytochrome P450 trt6 catalyzes three successive oxidations to transform terrenoid into an unstable intermediate, which then undergoes the D-ring expansion and unusual rearrangement of the methoxy group to afford the core skeleton of terretonin. Trt14 catalyzes the D-ring expansion of terretonin involving intramolecular methoxy rearrangement as well as the hydrolysis of the expanded D-ring and the methyl ester moiety. Finally, the nonheme iron-dependent dioxygenase trt7 accomplishes the last two oxidation reactions steps to complete the biosynthesis of terretonin. Terretonin C is produced via spontaneous decarboxylation of the terretonin precursor. Another shunt product of the terretonin biosynthesis is dihydrofarnesyl-DMOA, derived from epoxyfarnesyl-DMOA through hydrolysis of the epoxide. This is Dioxygenase trt7 from Aspergillus terreus (strain NIH 2624 / FGSC A1156).